The primary structure comprises 95 residues: Pyruvate dehydrogenase inhibitor (95 aa).

Belongs to the HesB/IscA family. Interacts with the E1 module of pyruvate dehydrogenase (PdhA-PdhB).

Its function is as follows. Acts as an inhibitor of the pyruvate dehydrogenase. Overexpression does not affect growth with glucose as the main carbon source, but it leads to a dramatic growth defect when cells are grown with pyruvate as the sole carbon source. This is Pyruvate dehydrogenase inhibitor from Bacillus subtilis (strain 168).